Consider the following 412-residue polypeptide: Peptidase T (412 aa).

Histidine 79 is a Zn(2+) binding site. The active site involves aspartate 81. Aspartate 142 is a binding site for Zn(2+). The active-site Proton acceptor is glutamate 176. Zn(2+)-binding residues include glutamate 177, aspartate 199, and histidine 381.

The protein belongs to the peptidase M20B family. Zn(2+) is required as a cofactor.

It localises to the cytoplasm. The catalysed reaction is Release of the N-terminal residue from a tripeptide.. Functionally, cleaves the N-terminal amino acid of tripeptides. The polypeptide is Peptidase T (Exiguobacterium sp. (strain ATCC BAA-1283 / AT1b)).